Consider the following 306-residue polypeptide: Putative S-adenosyl-L-methionine-dependent methyltransferase MAV_4442 (306 aa).

S-adenosyl-L-methionine-binding positions include Asp129 and Asp158 to Leu159.

Belongs to the UPF0677 family.

Its function is as follows. Exhibits S-adenosyl-L-methionine-dependent methyltransferase activity. In Mycobacterium avium (strain 104), this protein is Putative S-adenosyl-L-methionine-dependent methyltransferase MAV_4442.